The primary structure comprises 194 residues: dITP/XTP pyrophosphatase (194 aa).

Substrate is bound at residue 9 to 14; sequence THNPGK. Mg(2+)-binding residues include D40 and D69. Catalysis depends on D69, which acts as the Proton acceptor. Residues S70, 152–155, K175, and 180–181 each bind substrate; these read FGYD and HR.

Belongs to the HAM1 NTPase family. Homodimer. The cofactor is Mg(2+).

It carries out the reaction XTP + H2O = XMP + diphosphate + H(+). It catalyses the reaction dITP + H2O = dIMP + diphosphate + H(+). The catalysed reaction is ITP + H2O = IMP + diphosphate + H(+). Its function is as follows. Pyrophosphatase that catalyzes the hydrolysis of nucleoside triphosphates to their monophosphate derivatives, with a high preference for the non-canonical purine nucleotides XTP (xanthosine triphosphate), dITP (deoxyinosine triphosphate) and ITP. Seems to function as a house-cleaning enzyme that removes non-canonical purine nucleotides from the nucleotide pool, thus preventing their incorporation into DNA/RNA and avoiding chromosomal lesions. This Caulobacter vibrioides (strain ATCC 19089 / CIP 103742 / CB 15) (Caulobacter crescentus) protein is dITP/XTP pyrophosphatase.